Here is a 71-residue protein sequence, read N- to C-terminus: Protein cef (71 aa).

Plays a role in the processing of a cluster of viral tRNAs. The protein is Protein cef (cef) of Escherichia coli (Bacteriophage T4).